A 297-amino-acid polypeptide reads, in one-letter code: MQAYDDEIVGTALASNVLALADRVRTADGVEALSEQHRLALEHPGLRAHHLVVTDPAGAVVGYASVLGSSVEMLVDAAHRGEGVGHRLAEAALAVEPTLAFWAHGDLPGAAQLAEAIGLRRVRELWHLGRDLAPAGAGGDEAALLATPLPGGERLRTFGGTEAEEHAWLALNARAFASHPEQGAMTLEDLRVREGETWFDPSLLWLVHDDGDGALLASMWLKVPDAATGEIYVLGVDPGAQGRGLGRALTDRALDVLRARGVDRVELYVEGENARARALYEHSGFTPVAVHAQYGIP.

1D-myo-inositol 2-(L-cysteinylamino)-2-deoxy-alpha-D-glucopyranoside is bound at residue Glu-35. An acetyl-CoA-binding site is contributed by 73–75 (MLV). Residues 155–297 (LRTFGGTEAE…VAVHAQYGIP (143 aa)) enclose the N-acetyltransferase domain. 3 residues coordinate 1D-myo-inositol 2-(L-cysteinylamino)-2-deoxy-alpha-D-glucopyranoside: Glu-181, Lys-222, and Glu-230. Acetyl-CoA contacts are provided by residues 234–236 (LGV) and 241–247 (QGRGLGR). Residue Tyr-268 participates in 1D-myo-inositol 2-(L-cysteinylamino)-2-deoxy-alpha-D-glucopyranoside binding.

This sequence belongs to the acetyltransferase family. MshD subfamily. In terms of assembly, monomer.

The enzyme catalyses 1D-myo-inositol 2-(L-cysteinylamino)-2-deoxy-alpha-D-glucopyranoside + acetyl-CoA = mycothiol + CoA + H(+). Functionally, catalyzes the transfer of acetyl from acetyl-CoA to desacetylmycothiol (Cys-GlcN-Ins) to form mycothiol. The polypeptide is Mycothiol acetyltransferase (Beutenbergia cavernae (strain ATCC BAA-8 / DSM 12333 / CCUG 43141 / JCM 11478 / NBRC 16432 / NCIMB 13614 / HKI 0122)).